The chain runs to 127 residues: Fluoride-specific ion channel FluC (127 aa).

4 helical membrane-spanning segments follow: residues 4 to 24 (IIYIFIGGGMGSVTRYLTQIA), 34 to 54 (FPFPWGTFAVNIIGSLLIGFF), 65 to 85 (FELRLFLTVGFCGGFTTFSTL), and 97 to 117 (FYGIFTFYVFISILLGLLAVL). Na(+)-binding residues include glycine 77 and threonine 80.

It belongs to the fluoride channel Fluc/FEX (TC 1.A.43) family.

Its subcellular location is the cell inner membrane. It catalyses the reaction fluoride(in) = fluoride(out). Its activity is regulated as follows. Na(+) is not transported, but it plays an essential structural role and its presence is essential for fluoride channel function. In terms of biological role, fluoride-specific ion channel. Important for reducing fluoride concentration in the cell, thus reducing its toxicity. In Bacteroides fragilis (strain ATCC 25285 / DSM 2151 / CCUG 4856 / JCM 11019 / LMG 10263 / NCTC 9343 / Onslow / VPI 2553 / EN-2), this protein is Fluoride-specific ion channel FluC.